The following is a 96-amino-acid chain: Co-chaperonin GroES (96 aa).

This sequence belongs to the GroES chaperonin family. As to quaternary structure, heptamer of 7 subunits arranged in a ring. Interacts with the chaperonin GroEL.

Its subcellular location is the cytoplasm. Together with the chaperonin GroEL, plays an essential role in assisting protein folding. The GroEL-GroES system forms a nano-cage that allows encapsulation of the non-native substrate proteins and provides a physical environment optimized to promote and accelerate protein folding. GroES binds to the apical surface of the GroEL ring, thereby capping the opening of the GroEL channel. This Chromohalobacter salexigens (strain ATCC BAA-138 / DSM 3043 / CIP 106854 / NCIMB 13768 / 1H11) protein is Co-chaperonin GroES.